A 1087-amino-acid polypeptide reads, in one-letter code: Formin-H (1087 aa).

Over residues 1-23 (MSFDLESNSSGGSTIGRNSSIRL) the composition is skewed to polar residues. The tract at residues 1 to 25 (MSFDLESNSSGGSTIGRNSSIRLSS) is disordered. The GBD/FH3 domain occupies 34–394 (VSLNEIIDLD…QLEDELKIHP (361 aa)). Composition is skewed to low complexity over residues 416 to 436 (FGFG…SMAK) and 549 to 558 (SPGSTLSPSP). Disordered stretches follow at residues 416 to 445 (FGFG…DNEE), 549 to 625 (SPGS…PAKP), and 1048 to 1087 (VDSL…QLKK). Residues 433–461 (SMAKTELKKDNEEKQKTIEHLLKQLNKFS) adopt a coiled-coil conformation. Positions 569-588 (FGITSSSIHTSTDKLTNSTE) are enriched in polar residues. The FH1 domain maps to 589 to 615 (PILGSPPPPPPPPMSGGGGPPPPPPPP). The segment covering 592–616 (GSPPPPPPPPMSGGGGPPPPPPPPG) has biased composition (pro residues). The FH2 domain maps to 623 to 1016 (AKPIIKPSVK…ENSKMEDPEK (394 aa)). The DAD domain maps to 1013 to 1051 (DPEKGGLQDLSSQIRSGQLFKDRRVGDSVIAQMQNVDSL).

It belongs to the formin homology family. Diaphanous subfamily. In terms of assembly, interacts with vasP, proB/profilin-2 and rac1A. Interacts (via GBD/FH3 domain) with activated Rho-GTPases.

Its subcellular location is the cytoplasm. The protein localises to the cell cortex. The protein resides in the cytoskeleton. Functionally, formins play an important role in the nucleation of actin and the formation of linear actin filaments. Important for cell migration and formation, elongation and maintenance of filopodia. Specifically controls filopodial dynamics by regulating actin turnover at the barbed ends of actin filaments. The polypeptide is Formin-H (forH) (Dictyostelium discoideum (Social amoeba)).